We begin with the raw amino-acid sequence, 110 residues long: uncharacterized protein (110 aa).

This sequence to M.jannaschii MJ0123 and A.aeolicus AA15.

This is an uncharacterized protein from Methanocaldococcus jannaschii (strain ATCC 43067 / DSM 2661 / JAL-1 / JCM 10045 / NBRC 100440) (Methanococcus jannaschii).